The chain runs to 125 residues: Small ribosomal subunit protein uS12 (125 aa).

Asp-89 carries the 3-methylthioaspartic acid modification.

This sequence belongs to the universal ribosomal protein uS12 family. In terms of assembly, part of the 30S ribosomal subunit. Contacts proteins S8 and S17. May interact with IF1 in the 30S initiation complex.

In terms of biological role, with S4 and S5 plays an important role in translational accuracy. Its function is as follows. Interacts with and stabilizes bases of the 16S rRNA that are involved in tRNA selection in the A site and with the mRNA backbone. Located at the interface of the 30S and 50S subunits, it traverses the body of the 30S subunit contacting proteins on the other side and probably holding the rRNA structure together. The combined cluster of proteins S8, S12 and S17 appears to hold together the shoulder and platform of the 30S subunit. This Acidovorax sp. (strain JS42) protein is Small ribosomal subunit protein uS12.